Consider the following 857-residue polypeptide: A-kinase anchor protein 1, mitochondrial (857 aa).

A mitochondrion-targeting transit peptide spans 1 to 29 (MAIQLRSLFPLALPGMLALLGWWWFFSRK). Residue Ser55 is modified to Phosphoserine. The disordered stretch occupies residues 65-121 (VAPTVTQPPGREEQRCVDKPSTEPLALPRTRQVRRRSESSGNLPSVADTRSQPGPCR). Residues 74–85 (GREEQRCVDKPS) are compositionally biased toward basic and acidic residues. Residues Ser101, Ser103, and Ser164 each carry the phosphoserine modification. Residues 103–116 (SSGNLPSVADTRSQ) are compositionally biased toward polar residues. Disordered stretches follow at residues 165–198 (ALGK…GDAV) and 260–303 (FVEP…VPEN). The segment covering 286–299 (SDRDLAGELDKDET) has biased composition (basic and acidic residues). Residues 306–319 (IKQAAFQLISQVIL) are PKA-RII subunit binding domain. Disordered regions lie at residues 336 to 437 (QVHP…NPRG), 466 to 497 (STSG…TQPF), and 512 to 554 (EDGW…QAGS). Over residues 354 to 379 (PASQETSLGQDTSDPASTRTGATASP) the composition is skewed to polar residues. Thr401 is subject to Phosphothreonine. The segment covering 466 to 482 (STSGLEDSCTETISSSG) has biased composition (polar residues). The residue at position 487 (Thr487) is a Phosphothreonine. Phosphoserine occurs at positions 527 and 546. Residues 545-554 (DSPQSVQAGS) show a composition bias toward polar residues. In terms of domain architecture, KH spans 561-625 (LIIWEIEVPK…HHVDKALNLI (65 aa)). One can recognise a Tudor domain in the interval 712–771 (PVEITVICAAPGADGAWWRAQVVASYEETNEVEIRYVDYGGYKRVKVDVLRQIRSDFVTL).

As to quaternary structure, interacts with SLC8A3. Interacts with CFAP91. Interacts with CLPB. Interacts with NDUFS1. Highest expression in testis, heart, liver, skeletal muscle, intestine and kidney, followed by brain and lung. No expression in spleen. Isoform 1/D-AKAP1A is expressed predominantly in testis whereas isoform 4/D-AKAP1D is expressed primarily in liver. Expression is decreased in hearts of diabetic mice (at protein level).

It localises to the mitochondrion outer membrane. The protein resides in the mitochondrion. The protein localises to the endoplasmic reticulum. Functionally, differentially targeted protein that binds to type I and II regulatory subunits of protein kinase A. Anchors them to the cytoplasmic face of the mitochondrial outer membrane or allows them to reside in the endoplasmic reticulum. Involved in mitochondrial-mediated antiviral innate immunity. Promotes translocation of NDUFS1 into mitochondria to regulate mitochondrial membrane respiratory chain NADH dehydrogenase (Complex I) activity. Under diabetic conditions, myocardial AKAP1 expression decreases which blocks the translocation of NDUFS1 from the cytosol to mitochondria. Reduction of NDUFS1 in mitochondria decreases ATP production and increases mitochondrial ROS level, which causes mitochondrial dysfunction and cell apoptosis, respectively, thereby leading to cardiac dysfunction. This chain is A-kinase anchor protein 1, mitochondrial, found in Mus musculus (Mouse).